Reading from the N-terminus, the 265-residue chain is O-methyltransferase NEC2 (265 aa).

This sequence belongs to the methyltransferase superfamily.

It carries out the reaction desmethylnectriapyrone + S-adenosyl-L-methionine = nectriapyrone + S-adenosyl-L-homocysteine + H(+). O-methyltransferase; part of the gene cluster that mediates the biosynthesis of nectriapyrone and its analogs phomopyrone A, acropyrone and zaepyrone. The nectriapyrone biosynthetic gene cluster consists of two genes, the highly reducing polyketide synthase NEC1 that produces a demethylated analog of nectriapyrone from one unit of acetyl-CoA and one unit of malonyl-CoA; and the O-methyltransferase NEC2 that further methylates the NEC1 product to yield nectriapyrone. Nectriapyrone is further hydrolyzed to nectriapyrone D, also known as gulypyrone B, by an unidentified hydrolase localized outside the nectriapyrone cluster. The protein is O-methyltransferase NEC2 of Pyricularia oryzae (strain 70-15 / ATCC MYA-4617 / FGSC 8958) (Rice blast fungus).